The primary structure comprises 353 residues: Sesquiterpene synthase Agr8 (353 aa).

Mg(2+) contacts are provided by D82, N220, S224, and E228. A DDXXD motif motif is present at residues 82–86 (DEYTD). Residues R309 and Y310 each coordinate (2E,6E)-farnesyl diphosphate.

Belongs to the terpene synthase family. Mg(2+) is required as a cofactor.

It carries out the reaction (2E,6E)-farnesyl diphosphate = gamma-muurolene + diphosphate. The catalysed reaction is (2E,6E)-farnesyl diphosphate = alpha-selinene + diphosphate. It catalyses the reaction (2E,6E)-farnesyl diphosphate = delta-cadinene + diphosphate. Functionally, terpene cyclase that catalyzes the cyclization of farnesyl diphosphate (FPP) to various sesquiterpenes, including beta-elemene, gamma-muurolene, alpha-selinene, beta-selinene, beta-cadinene, delta-cadinene and alpha-cadinol. The protein is Sesquiterpene synthase Agr8 of Cyclocybe aegerita (Black poplar mushroom).